The chain runs to 218 residues: Large ribosomal subunit protein uL3 (218 aa).

It belongs to the universal ribosomal protein uL3 family. As to quaternary structure, part of the 50S ribosomal subunit. Forms a cluster with proteins L14 and L19.

One of the primary rRNA binding proteins, it binds directly near the 3'-end of the 23S rRNA, where it nucleates assembly of the 50S subunit. This Corynebacterium aurimucosum (strain ATCC 700975 / DSM 44827 / CIP 107346 / CN-1) (Corynebacterium nigricans) protein is Large ribosomal subunit protein uL3.